The chain runs to 373 residues: MQRDGTNEQCFLELASPMSFILNILRNMLAYFGVPVDQDLLIFQNKDYGSARSIVRVIGRMLPLEPCRRPRFELTPPANAKEVDDYELAVPSFADVLCVADDGEAGCLRFRHSLWKKAEGKAALFHPSKLPWDLSSPALSQNRTVADDLPVSEAAIKKIAALEDELTSLRAQIAAIVAMQDLGGGGETGFISLSDGPSMEQVPPSSATARLSVEPDHVPSVVLSPPPLPPPPPPLPPPQFSLQPPSSLPVPPGSANTRGIDNLAAEMKKRPSGVKKTDGSHHSESQRVSDVPNMLDVLKDMNKVKLRPVERSPGGRPIQKRRRQSSQWDPVSLISNALKQKFAFQDDSFDSENRSWQGSPFSSPETSRNGSRF.

Ser136 carries the phosphoserine modification. A coiled-coil region spans residues 151–179 (VSEAAIKKIAALEDELTSLRAQIAAIVAM). 2 disordered regions span residues 189-331 (GFIS…WDPV) and 346-373 (DDSFDSENRSWQGSPFSSPETSRNGSRF). Residues 224 to 239 (SPPPLPPPPPPLPPPQ) show a composition bias toward pro residues. 2 stretches are compositionally biased toward basic and acidic residues: residues 275–287 (KKTDGSHHSESQR) and 297–310 (VLKDMNKVKLRPVE). Residues Ser312 and Ser348 each carry the phosphoserine modification. The segment covering 354 to 373 (RSWQGSPFSSPETSRNGSRF) has biased composition (polar residues).

This sequence belongs to the MTFR1 family.

Its subcellular location is the mitochondrion. Its function is as follows. May play a role in mitochondrial aerobic respiration essentially in the testis. Can also promote mitochondrial fission. The polypeptide is Mitochondrial fission regulator 2 (Mtfr2) (Rattus norvegicus (Rat)).